A 409-amino-acid chain; its full sequence is Argininosuccinate synthase (409 aa).

ATP-binding positions include 13–21 and Ala40; that span reads AYSGGLDTS. L-citrulline-binding residues include Tyr91 and Ser96. Gly121 is an ATP binding site. L-aspartate is bound by residues Thr123, Asn127, and Asp128. Asn127 lines the L-citrulline pocket. L-citrulline-binding residues include Arg131, Ser183, Ser192, Glu268, and Tyr280.

It belongs to the argininosuccinate synthase family. Type 1 subfamily. In terms of assembly, homotetramer.

The protein resides in the cytoplasm. It catalyses the reaction L-citrulline + L-aspartate + ATP = 2-(N(omega)-L-arginino)succinate + AMP + diphosphate + H(+). The protein operates within amino-acid biosynthesis; L-arginine biosynthesis; L-arginine from L-ornithine and carbamoyl phosphate: step 2/3. In Saccharophagus degradans (strain 2-40 / ATCC 43961 / DSM 17024), this protein is Argininosuccinate synthase.